The following is an 830-amino-acid chain: MGKNRRKQKVIPPPLLPPDVAEEDIEFSDEDLKYVKENTDYAQFVSQIDTAAINKQCGGRVMTVEDKYEEERSKRKTLQEEKGNGEILVDPVDVLPVKTLDGKLHYRTESKKSKLAEAETDEAEKDVLEDEHVLNKSQRREKAKKSKREAKKHEKDLPDEILQEEEETPQAAVLAEVKEELSAEESFENKKNKIAELGMLLLSDPEANIKTLKDMLDICKDQNTKIVKLALLSLLAVFKDIIPGYRIRLPTEKELEMKISKEVKKTRFYESTLLKAYKSYLQKLIIFEKQSVYNQIANRCLCTLLEAVPHFNYRDNLLIAVVRNISSPDEVVRRLCCSTIRYLFSNEGKHGGELTVQAVRLIADHVKAHNCQLHPNAIEVFMSIRFDEDIGKPNKEDEHNKKYKKNNKRKTQEEQNQVQENERKKSKKDMMSKIRDEVSADHRGVTYEPDAKERRKMQTETLSAVFETYFRILRNTMYTIGERTEEIPTSNPGAFGSHPLLAPCLDGLAKFTQQLDLDYMGDLMNYLKKLASSSSSVSNNTKQKNSKLLTVSERLRCCLVAFKVMRSNLNALNVDLQDFFVQLYNLILEYRPGRDSGVILAESLKIMLCDDRHQDMQKAAAFVKRLATFALCFGCAESMSALVTLKTLLQKNVKCRNLLENDAGGGSVSGSIAKYQPYATDPNLSGALATVLWELSLLSKHYHPAISTMATTVSNMNTSQSQTFLSAVTPQQAFADFSLVKESFEPKNESRKLNNKRKRESLPEEAKNVPEIDMVKLSKKLKENFTILRDIKEDERVRMELLQSEEKKPLKKQNNVVKKKLKNPKSKKQI.

Disordered regions lie at residues 1-22, 67-86, 112-169, 391-436, and 802-830; these read MGKN…DVAE, KYEE…GNGE, KSKL…EETP, GKPN…KIRD, and LQSE…KKQI. 2 coiled-coil regions span residues 61–81 and 111–156; these read VMTV…LQEE and KKSK…HEKD. A compositionally biased stretch (basic and acidic residues) spans 67 to 84; that stretch reads KYEEERSKRKTLQEEKGN. Positions 118 to 129 are enriched in acidic residues; sequence AETDEAEKDVLE. The segment covering 130 to 140 has biased composition (basic and acidic residues); the sequence is DEHVLNKSQRR. A Nuclear localization signal 1 motif is present at residues 138–145; it reads QRREKAKK. A compositionally biased stretch (basic residues) spans 141-150; the sequence is EKAKKSKREA. Residues 159-168 show a composition bias toward acidic residues; it reads DEILQEEEET. The segment covering 391 to 400 has biased composition (basic and acidic residues); the sequence is GKPNKEDEHN. Residues 400-429 adopt a coiled-coil conformation; that stretch reads NKKYKKNNKRKTQEEQNQVQENERKKSKKD. The Nuclear localization signal 2 motif lies at 408–415; sequence KRKTQEEQ. Basic and acidic residues predominate over residues 420-436; that stretch reads ENERKKSKKDMMSKIRD. Positions 806–813 match the Nuclear localization signal 3 motif; it reads EKKPLKKQ. Over residues 817–830 the composition is skewed to basic residues; sequence VKKKLKNPKSKKQI.

The protein belongs to the CBF/MAK21 family. As to quaternary structure, component of nucleolar complexes. Interacts with RBL and NOC2 in both the nucleolus and nucleoplasm.

The protein resides in the nucleus. It is found in the nucleolus. The protein localises to the nucleoplasm. In terms of biological role, may be required for synthesis of 60S ribosomal subunits and the transport of pre-ribosomes from the nucleoplasm to the cytoplasm. Also required for initiation of DNA replication. In Arabidopsis thaliana (Mouse-ear cress), this protein is Nucleolar complex-associated protein 3.